Consider the following 149-residue polypeptide: D-aminoacyl-tRNA deacylase (149 aa).

The short motif at 137–138 (GP) is the Gly-cisPro motif, important for rejection of L-amino acids element.

Belongs to the DTD family. In terms of assembly, homodimer.

It is found in the cytoplasm. It catalyses the reaction glycyl-tRNA(Ala) + H2O = tRNA(Ala) + glycine + H(+). The enzyme catalyses a D-aminoacyl-tRNA + H2O = a tRNA + a D-alpha-amino acid + H(+). Its function is as follows. An aminoacyl-tRNA editing enzyme that deacylates mischarged D-aminoacyl-tRNAs. Also deacylates mischarged glycyl-tRNA(Ala), protecting cells against glycine mischarging by AlaRS. Acts via tRNA-based rather than protein-based catalysis; rejects L-amino acids rather than detecting D-amino acids in the active site. By recycling D-aminoacyl-tRNA to D-amino acids and free tRNA molecules, this enzyme counteracts the toxicity associated with the formation of D-aminoacyl-tRNA entities in vivo and helps enforce protein L-homochirality. The polypeptide is D-aminoacyl-tRNA deacylase (Syntrophobacter fumaroxidans (strain DSM 10017 / MPOB)).